The primary structure comprises 287 residues: Mitochondrial dicarboxylate carrier (287 aa).

Solcar repeat units follow at residues 8 to 88 (SRWY…VRDR), 101 to 188 (EKVL…AKQL), and 197 to 280 (DNIF…LRKN). 6 consecutive transmembrane segments (helical) span residues 10–30 (WYFG…LDLL), 63–82 (GLSA…FAIY), 103–123 (VLLG…ADLV), 163–182 (GATM…LSCY), 203–223 (FVAS…LDVL), and 255–275 (GLVP…VFLE).

Belongs to the mitochondrial carrier (TC 2.A.29) family. Present in high amounts in liver and kidney, and at lower levels in all the other tissues analyzed.

It localises to the mitochondrion inner membrane. The catalysed reaction is (S)-malate(in) + phosphate(out) = (S)-malate(out) + phosphate(in). It catalyses the reaction malonate(out) + (S)-malate(in) = malonate(in) + (S)-malate(out). It carries out the reaction (S)-malate(in) + succinate(out) = (S)-malate(out) + succinate(in). The enzyme catalyses (S)-malate(in) + sulfate(out) = (S)-malate(out) + sulfate(in). The catalysed reaction is malonate(out) + phosphate(in) = malonate(in) + phosphate(out). It catalyses the reaction succinate(out) + phosphate(in) = succinate(in) + phosphate(out). It carries out the reaction sulfate(out) + phosphate(in) = sulfate(in) + phosphate(out). The enzyme catalyses malonate(out) + succinate(in) = malonate(in) + succinate(out). Its function is as follows. Catalyzes the electroneutral exchange or flux of physiologically important metabolites such as dicarboxylates (malonate, malate, succinate), inorganic sulfur-containing anions, and phosphate, across mitochondrial inner membrane. Plays an important role in gluconeogenesis, fatty acid metabolism, urea synthesis, and sulfur metabolism, particularly in liver, by supplying the substrates for the different metabolic processes. Regulates fatty acid release from adipocytes, and contributes to systemic insulin sensitivity. The polypeptide is Mitochondrial dicarboxylate carrier (SLC25A10) (Homo sapiens (Human)).